Reading from the N-terminus, the 404-residue chain is Lupus La protein homolog (404 aa).

In terms of domain architecture, HTH La-type RNA-binding spans 7–99 (NEKMAALEAK…RRSPSKPLPE (93 aa)). Residues S92 and S94 each carry the phosphoserine modification. Positions 111–187 (RSVYIKGFPT…TDLLILFKED (77 aa)) constitute an RRM domain. Residue K116 is modified to N6-acetyllysine. T120 bears the Phosphothreonine mark. N6-acetyllysine is present on K128. S225 is modified (phosphoserine). Residues 227–348 (EEKIGCLLKF…KGKGNKAAQA (122 aa)) enclose the xRRM domain. N6-acetyllysine occurs at positions 328 and 341. A compositionally biased stretch (basic residues) spans 329–342 (WKSKGRRFKGKGKG). A disordered region spans residues 329 to 404 (WKSKGRRFKG…QKTENGAGDQ (76 aa)). A compositionally biased stretch (low complexity) spans 343 to 354 (NKAAQAGSAKGK). K360 carries the N6-acetyllysine modification. T362 is subject to Phosphothreonine. Phosphoserine is present on S366. A compositionally biased stretch (basic and acidic residues) spans 381–391 (RAREETDKEPP).

In terms of assembly, interacts with DDX15. May interact with RUFY1. Phosphorylated in the C-terminal part of the protein.

It localises to the nucleus. Functionally, binds to the 3' poly(U) terminus of nascent RNA polymerase III transcripts, protecting them from exonuclease digestion and facilitating their folding and maturation. In Bos taurus (Bovine), this protein is Lupus La protein homolog (SSB).